The sequence spans 38 residues: Photosystem II reaction center protein X 2 (38 aa).

Residues 8 to 28 (FLWSLVYGAVVLGLLFGAIVF) form a helical membrane-spanning segment.

This sequence belongs to the PsbX family. Type 1 subfamily. As to quaternary structure, PSII is composed of 1 copy each of membrane proteins PsbA, PsbB, PsbC, PsbD, PsbE, PsbF, PsbH, PsbI, PsbJ, PsbK, PsbL, PsbM, PsbT, PsbX, PsbY, PsbZ, Psb30/Ycf12, peripheral proteins PsbO, CyanoQ (PsbQ), PsbU, PsbV and a large number of cofactors. It forms dimeric complexes.

The protein resides in the cellular thylakoid membrane. Functionally, involved in the binding and/or turnover of quinones at the Q(B) site of photosystem II (PSII). PSII is a light-driven water plastoquinone oxidoreductase, using light energy to abstract electrons from H(2)O, generating a proton gradient subsequently used for ATP formation. This is Photosystem II reaction center protein X 2 from Synechococcus sp. (strain JA-3-3Ab) (Cyanobacteria bacterium Yellowstone A-Prime).